The following is a 236-amino-acid chain: 2,3,4,5-tetrahydropyridine-2,6-dicarboxylate N-acetyltransferase (236 aa).

The protein belongs to the transferase hexapeptide repeat family. DapH subfamily.

It carries out the reaction (S)-2,3,4,5-tetrahydrodipicolinate + acetyl-CoA + H2O = L-2-acetamido-6-oxoheptanedioate + CoA. The protein operates within amino-acid biosynthesis; L-lysine biosynthesis via DAP pathway; LL-2,6-diaminopimelate from (S)-tetrahydrodipicolinate (acetylase route): step 1/3. In terms of biological role, catalyzes the transfer of an acetyl group from acetyl-CoA to tetrahydrodipicolinate. The polypeptide is 2,3,4,5-tetrahydropyridine-2,6-dicarboxylate N-acetyltransferase (Geobacillus kaustophilus (strain HTA426)).